The chain runs to 993 residues: uncharacterized protein (993 aa).

A signal peptide spans M1–S24. N7, N44, N89, N121, N138, N161, N169, N232, N361, N386, N393, N423, N447, N480, and N488 each carry an N-linked (GlcNAc...) asparagine glycan. The active site involves E504. N545, N548, and N614 each carry an N-linked (GlcNAc...) asparagine glycan. D672 acts as the Proton donor in catalysis. N-linked (GlcNAc...) asparagine glycosylation is found at N673, N814, N826, N835, N846, N910, N940, and N987.

The protein belongs to the glycosyl hydrolase 31 family.

This is an uncharacterized protein from Schizosaccharomyces pombe (strain 972 / ATCC 24843) (Fission yeast).